Here is an 88-residue protein sequence, read N- to C-terminus: UPF0335 protein MexAM1_META1p2947 (88 aa).

The protein belongs to the UPF0335 family.

The chain is UPF0335 protein MexAM1_META1p2947 from Methylorubrum extorquens (strain ATCC 14718 / DSM 1338 / JCM 2805 / NCIMB 9133 / AM1) (Methylobacterium extorquens).